The chain runs to 451 residues: AP-4 complex subunit mu (451 aa).

Residues 184-450 (REEIFVDIIE…VTQANSYVAR (267 aa)) form the MHD domain.

The protein belongs to the adaptor complexes medium subunit family. Adaptor protein complex 4 (AP-4) is a heterotetramer composed of two large adaptins (epsilon-type subunit and beta-type subunit), a medium adaptin (mu-type subunit) and a small adaptin (sigma-type subunit).

It is found in the golgi apparatus. The protein localises to the trans-Golgi network. Its subcellular location is the membrane. The protein resides in the coated pit. Functionally, subunit of novel type of clathrin- or non-clathrin-associated protein coat involved in targeting proteins from the trans-Golgi network (TGN) to the endosomal-lysosomal system. This chain is AP-4 complex subunit mu (AP4M), found in Arabidopsis thaliana (Mouse-ear cress).